Consider the following 378-residue polypeptide: Gibberellin 20 oxidase 2 (378 aa).

A compositionally biased stretch (polar residues) spans 1 to 10 (MAILCTTTSP). The tract at residues 1–26 (MAILCTTTSPAEKEHEPKQDLEKDQT) is disordered. The segment covering 11-25 (AEKEHEPKQDLEKDQ) has biased composition (basic and acidic residues). The region spanning 220-320 (ENDSIMRLNH…RKSMAFFLCP (101 aa)) is the Fe2OG dioxygenase domain. His245, Asp247, and His301 together coordinate Fe cation. Arg311 is an active-site residue.

It belongs to the iron/ascorbate-dependent oxidoreductase family. GA20OX subfamily. It depends on Fe(2+) as a cofactor. L-ascorbate is required as a cofactor. Expressed in inflorescence and developing siliques. Detected in seeds, roots, cotyledons and leaves. In seeds, specifically detected at the rim of the embryo and the outer integument.

It carries out the reaction gibberellin A12 + 2 2-oxoglutarate + 3 O2 + H(+) = gibberellin A9 + 2 succinate + 3 CO2 + 2 H2O. It catalyses the reaction gibberellin A12 + 2-oxoglutarate + O2 = gibberellin A15 + succinate + CO2. The enzyme catalyses gibberellin A15 + 2-oxoglutarate + O2 = gibberellin A24 + succinate + CO2 + H2O. The catalysed reaction is gibberellin A53 + 2-oxoglutarate + O2 = gibberellin A44 + succinate + CO2. It carries out the reaction gibberellin A12 + 3 2-oxoglutarate + 3 O2 = gibberellin A25 + 3 succinate + 3 CO2 + H2O + H(+). It functions in the pathway plant hormone biosynthesis; gibberellin biosynthesis. Its function is as follows. Key oxidase enzyme in the biosynthesis of gibberellin that catalyzes the conversion of GA12 to GA9, via a three-step oxidation at C-20 of the GA skeleton, and GA25 is also formed as a minor product. GA53 is less effectively oxidized than GA12 and is only oxidized one step to GA44. Involved in the promotion of the floral transition, fertility and silique elongation, but plays only a minor role in elongation of seedling organs. Acts redundantly with GA20OX1. The chain is Gibberellin 20 oxidase 2 (GA20OX2) from Arabidopsis thaliana (Mouse-ear cress).